Consider the following 362-residue polypeptide: Type-1 angiotensin II receptor A (362 aa).

Residues M1–N26 lie on the Extracellular side of the membrane. 2 N-linked (GlcNAc...) asparagine glycosylation sites follow: N3 and N18. Disulfide bonds link C19/C273 and C102/C181. A helical transmembrane segment spans residues Y27 to S56. Residues Y57 to T62 are Cytoplasmic-facing. A helical membrane pass occupies residues V63 to A90. The Extracellular portion of the chain corresponds to M91–N99. The helical transmembrane segment at F100–D126 threads the bilayer. The Cytoplasmic segment spans residues R127–T142. Residues A143 to I166 traverse the membrane as a helical segment. The Extracellular segment spans residues Y167–Y191. An angiotensin II-binding site is contributed by R168. The N-linked (GlcNAc...) asparagine glycan is linked to N177. Positions 185 and 200 each coordinate angiotensin II. The chain crosses the membrane as a helical span at residues F192–T217. Residues L218 to F238 are Cytoplasmic-facing. The chain crosses the membrane as a helical span at residues K239 to M267. Over D268 to D277 the chain is Extracellular. A helical transmembrane segment spans residues I278–F303. The Cytoplasmic segment spans residues F304–K362. A lipid anchor (S-palmitoyl cysteine) is attached at C361.

The protein belongs to the G-protein coupled receptor 1 family. Post-translationally, C-terminal Ser or Thr residues may be phosphorylated. Expressed in lung, liver, kidney, and spleen, with highest expression in the heart.

The protein resides in the cell membrane. Functionally, receptor for angiotensin II, a vasoconstricting peptide, which acts as a key regulator of blood pressure and sodium retention by the kidney. The activated receptor in turn couples to G-alpha proteins G(q) (GNAQ, GNA11, GNA14 or GNA15) and thus activates phospholipase C and increases the cytosolic Ca(2+) concentrations, which in turn triggers cellular responses such as stimulation of protein kinase C. This Xenopus laevis (African clawed frog) protein is Type-1 angiotensin II receptor A (agtr1-a).